The sequence spans 653 residues: Endoglin (653 aa).

The signal sequence occupies residues 1 to 24 (MDRGVLPQAIALLLAVCSFGPTAG). Topologically, residues 25 to 581 (LAEGVQCDLQ…IVSPGLPDKG (557 aa)) are extracellular. The interval 27–44 (EGVQCDLQPVDPKVTYTT) is OR1, N-terminal part. The required for interaction with GDF2 stretch occupies residues 27–336 (EGVQCDLQPV…RSCGSGLQPS (310 aa)). 7 disulfide bridges follow: cysteine 31–cysteine 206, cysteine 51–cysteine 181, cysteine 241–cysteine 329, cysteine 349–cysteine 381, cysteine 362–cysteine 442, cysteine 393–cysteine 411, and cysteine 493–cysteine 549. An OR2 region spans residues 45-198 (SQVSEGCVAH…MGHTLEWKSH (154 aa)). N-linked (GlcNAc...) asparagine glycosylation occurs at asparagine 57. The tract at residues 199–329 (TQASVLGCHL…SVISLQDRSC (131 aa)) is OR1, C-terminal part. The interval 269–281 (KAWTTGEYSFKIF) is essential for interaction with GDF2. Asparagine 306 is a glycosylation site (N-linked (GlcNAc...) asparagine). Residues 362–512 (CSDDVMTLVL…MVDLIQNQEA (151 aa)) form the ZP domain. The chain crosses the membrane as a helical span at residues 582–606 (LVLPAVLGITFGAFLIGALLTAALW). Residues 607–653 (YIHSHTRHPGKREPVVAVAAPASSESSSTNHSIGSTQSTPCSTSSMA) are Cytoplasmic-facing. Over residues 625-634 (AAPASSESSS) the composition is skewed to low complexity. The interval 625–653 (AAPASSESSSTNHSIGSTQSTPCSTSSMA) is disordered. The segment covering 635 to 653 (TNHSIGSTQSTPCSTSSMA) has biased composition (polar residues). Phosphoserine; by TGFBR1 is present on residues serine 641 and serine 644.

In terms of assembly, homodimer; disulfide-linked. Forms a heteromeric complex with the signaling receptors for transforming growth factor-beta: TGFBR1 and/or TGFBR2. It is able to bind TGFB1 and TGFB2 with high affinity, but not TGFB3. Interacts with GDF2, forming a heterotetramer with a 2:2 stoichiometry. Interacts with ACVRL1. Can form a heteromeric complex with GDF2 and ACVRL1. Interacts with BMP10. Interacts with DYNLT4. Interacts with ARRB2.

It localises to the cell membrane. In terms of biological role, vascular endothelium glycoprotein that plays an important role in the regulation of angiogenesis. Required for normal structure and integrity of adult vasculature. Regulates the migration of vascular endothelial cells. Required for normal extraembryonic angiogenesis and for embryonic heart development. May regulate endothelial cell shape changes in response to blood flow, which drive vascular remodeling and establishment of normal vascular morphology during angiogenesis. May play a role in the binding of endothelial cells to integrins. Acts as a TGF-beta coreceptor and is involved in the TGF-beta/BMP signaling cascade that ultimately leads to the activation of SMAD transcription factors. Required for GDF2/BMP9 signaling through SMAD1 in endothelial cells and modulates TGFB1 signaling through SMAD3. The sequence is that of Endoglin (ENG) from Sus scrofa (Pig).